The chain runs to 48 residues: Large ribosomal subunit protein bL33A (48 aa).

The protein belongs to the bacterial ribosomal protein bL33 family.

The chain is Large ribosomal subunit protein bL33A from Shouchella clausii (strain KSM-K16) (Alkalihalobacillus clausii).